A 353-amino-acid polypeptide reads, in one-letter code: MTATLERRESASLWGRFCDWVTSTENRLYIGWFGVVMIPTLLTATSVFIIAFIAAPPVDIDGIREPVSGSLLYGNNIISGAIVPTSAAIGLHFYPIWEAASVDEWLYNGGPYELIVLHFFLGICCYMGREWELSYRLGMRPWIAVAYSAPVAAATAVFLIYPIGQGSFSDGMPLGISGTFNFMIVFQAEHNILMHPFHMLGVAGVFGGSLFSAMHGSLVTSSLIRETTENESANAGYKFGQEEETYNIVAAHGYFGRLIFQYASFNNSRSLHFFLAAWPVVGIWFTALGISTMAFNLNGFNFNQSVVDSQGRVINTWADIINRANLGMEVMHERNAHNFPLDLASVEAPSVNG.

N-acetylthreonine is present on Thr-2. Thr-2 carries the phosphothreonine modification. The next 3 helical transmembrane spans lie at 29-46 (YIGWFGVVMIPTLLTATS), 118-133 (HFFLGICCYMGREWEL), and 142-156 (WIAVAYSAPVAAATA). His-118 is a binding site for chlorophyll a. Tyr-126 is a binding site for pheophytin a. Asp-170 and Glu-189 together coordinate [CaMn4O5] cluster. Residues 197–218 (FHMLGVAGVFGGSLFSAMHGSL) traverse the membrane as a helical segment. Residue His-198 participates in chlorophyll a binding. Residues His-215 and 264–265 (SF) contribute to the a quinone site. Residue His-215 participates in Fe cation binding. Residue His-272 participates in Fe cation binding. A helical transmembrane segment spans residues 274–288 (FLAAWPVVGIWFTAL). [CaMn4O5] cluster-binding residues include His-332, Glu-333, Asp-342, and Ala-344. Positions 345–353 (SVEAPSVNG) are excised as a propeptide.

Belongs to the reaction center PufL/M/PsbA/D family. PSII is composed of 1 copy each of membrane proteins PsbA, PsbB, PsbC, PsbD, PsbE, PsbF, PsbH, PsbI, PsbJ, PsbK, PsbL, PsbM, PsbT, PsbX, PsbY, PsbZ, Psb30/Ycf12, at least 3 peripheral proteins of the oxygen-evolving complex and a large number of cofactors. It forms dimeric complexes. The D1/D2 heterodimer binds P680, chlorophylls that are the primary electron donor of PSII, and subsequent electron acceptors. It shares a non-heme iron and each subunit binds pheophytin, quinone, additional chlorophylls, carotenoids and lipids. D1 provides most of the ligands for the Mn4-Ca-O5 cluster of the oxygen-evolving complex (OEC). There is also a Cl(-1) ion associated with D1 and D2, which is required for oxygen evolution. The PSII complex binds additional chlorophylls, carotenoids and specific lipids. is required as a cofactor. Tyr-161 forms a radical intermediate that is referred to as redox-active TyrZ, YZ or Y-Z. In terms of processing, C-terminally processed by CTPA; processing is essential to allow assembly of the oxygen-evolving complex and thus photosynthetic growth.

Its subcellular location is the plastid. The protein resides in the chloroplast thylakoid membrane. The enzyme catalyses 2 a plastoquinone + 4 hnu + 2 H2O = 2 a plastoquinol + O2. Photosystem II (PSII) is a light-driven water:plastoquinone oxidoreductase that uses light energy to abstract electrons from H(2)O, generating O(2) and a proton gradient subsequently used for ATP formation. It consists of a core antenna complex that captures photons, and an electron transfer chain that converts photonic excitation into a charge separation. The D1/D2 (PsbA/PsbD) reaction center heterodimer binds P680, the primary electron donor of PSII as well as several subsequent electron acceptors. In Chaetosphaeridium globosum (Charophycean green alga), this protein is Photosystem II protein D1.